The sequence spans 222 residues: UPF0758 protein YicR (222 aa).

The MPN domain occupies 100–222 (PLLSPEMTRE…YVSFAERGWI (123 aa)). 3 residues coordinate Zn(2+): His171, His173, and Asp184. The short motif at 171–184 (HNHPSGCAEPSKAD) is the JAMM motif element.

It belongs to the UPF0758 family. YicR subfamily.

This is UPF0758 protein YicR from Shigella dysenteriae serotype 1 (strain Sd197).